A 515-amino-acid chain; its full sequence is Bifunctional purine biosynthesis protein PurH (515 aa).

Residues 1 to 145 (MTKRVLISVS…KNHASVTVVV (145 aa)) enclose the MGS-like domain.

It belongs to the PurH family.

It carries out the reaction (6R)-10-formyltetrahydrofolate + 5-amino-1-(5-phospho-beta-D-ribosyl)imidazole-4-carboxamide = 5-formamido-1-(5-phospho-D-ribosyl)imidazole-4-carboxamide + (6S)-5,6,7,8-tetrahydrofolate. The enzyme catalyses IMP + H2O = 5-formamido-1-(5-phospho-D-ribosyl)imidazole-4-carboxamide. The protein operates within purine metabolism; IMP biosynthesis via de novo pathway; 5-formamido-1-(5-phospho-D-ribosyl)imidazole-4-carboxamide from 5-amino-1-(5-phospho-D-ribosyl)imidazole-4-carboxamide (10-formyl THF route): step 1/1. It participates in purine metabolism; IMP biosynthesis via de novo pathway; IMP from 5-formamido-1-(5-phospho-D-ribosyl)imidazole-4-carboxamide: step 1/1. This is Bifunctional purine biosynthesis protein PurH from Streptococcus pneumoniae (strain JJA).